The chain runs to 217 residues: Adr-2-binding protein 1 (217 aa).

Positions 33–65 are disordered; that stretch reads ARPEPQHDSLKRRNTTSSIAKKKAKMTRGDEQI. The span at 44-58 shows a compositional bias: basic residues; that stretch reads RRNTTSSIAKKKAKM.

As to quaternary structure, interacts with double-stranded RNA-specific adenosine deaminase adr-2. In terms of tissue distribution, expressed in main body hypodermal cells, the hypodermal seam cells, pharynx, intestine and some neurons.

The protein localises to the nucleus. Functionally, required for the A-I editing activity of the double-stranded RNA-specific adenosine deaminase adr-2 by facilitating adr-2 nuclear localization. This chain is Adr-2-binding protein 1, found in Caenorhabditis elegans.